The chain runs to 267 residues: Distal basal body ring component protein (267 aa).

Positions 1-29 (MKAFLFAAAATLVITALSAPAFAGTPVTL) are cleaved as a signal peptide.

As to quaternary structure, flaD is a subunit of the flagellar transenvelope basal body.

It is found in the periplasm. Its subcellular location is the bacterial flagellum basal body. Functionally, flaD might be the structural protein of the distal basal body ring P, or it is necessary for the assembly of the P ring. The sequence is that of Distal basal body ring component protein (flaD) from Caulobacter vibrioides (strain ATCC 19089 / CIP 103742 / CB 15) (Caulobacter crescentus).